The sequence spans 154 residues: SsrA-binding protein (154 aa).

The tract at residues 134–154 (QREDLKRRAEDRDTQRELARF) is disordered.

It belongs to the SmpB family.

The protein localises to the cytoplasm. Required for rescue of stalled ribosomes mediated by trans-translation. Binds to transfer-messenger RNA (tmRNA), required for stable association of tmRNA with ribosomes. tmRNA and SmpB together mimic tRNA shape, replacing the anticodon stem-loop with SmpB. tmRNA is encoded by the ssrA gene; the 2 termini fold to resemble tRNA(Ala) and it encodes a 'tag peptide', a short internal open reading frame. During trans-translation Ala-aminoacylated tmRNA acts like a tRNA, entering the A-site of stalled ribosomes, displacing the stalled mRNA. The ribosome then switches to translate the ORF on the tmRNA; the nascent peptide is terminated with the 'tag peptide' encoded by the tmRNA and targeted for degradation. The ribosome is freed to recommence translation, which seems to be the essential function of trans-translation. This chain is SsrA-binding protein, found in Nitratidesulfovibrio vulgaris (strain ATCC 29579 / DSM 644 / CCUG 34227 / NCIMB 8303 / VKM B-1760 / Hildenborough) (Desulfovibrio vulgaris).